A 150-amino-acid chain; its full sequence is Detocs response regulatory protein DtcB (150 aa).

Residues 2–150 (KILIADDNIQ…TDLIKKITEL (149 aa)) form the Response regulatory domain. Asp-54 is modified (4-aspartylphosphate).

In terms of processing, probably phosphorylated by DtcA.

In terms of biological role, possible phosphate scavenger member of the two-component regulatory system Detocs that confers resistance to bacteriophage. When the system (DtcA-DtcB-DtcC) is expressed in a susceptible E.coli (strain MG1655) it confers resistance to bacteriophages T2, T4, T5, T7, SECphi4, SECphi6 and SECphi27; the level of resistance varies, resistance to T2, T7 and SECphi4 is not very high. DtcA probably autophosphorylates upon sensing viral infection, and subsequently transfers the phosphate signal to DtcC which activates it, leading to an antiviral defense; DtcB (this subunit) may scavenge phosphorylation signals from accidental activation of DtcA. In Enterobacter cloacae (strain JD6301), this protein is Detocs response regulatory protein DtcB.